We begin with the raw amino-acid sequence, 3133 residues long: Cysteine repeat modular protein A (3133 aa).

The disordered stretch occupies residues 1–39 (MDSASTSMSRVHPSGVYRRPLLPSGGPRSTSERDERVDL). Positions 30–39 (TSERDERVDL) are enriched in basic and acidic residues. The chain crosses the membrane as a helical span at residues 123–143 (LFLLFSSSPLLLLLLLHQFFI). 2 stretches are compositionally biased toward basic and acidic residues: residues 173–211 (TFEE…DGKE) and 301–311 (NESEKAERARL). 2 disordered regions span residues 173 to 234 (TFEE…EGRR) and 294 to 317 (VSPS…STPA). N-linked (GlcNAc...) asparagine glycosylation is found at Asn301, Asn392, and Asn470. The 68-residue stretch at 577–644 (DETLEQGKLY…DPHVRFDFCD (68 aa)) folds into the Kringle domain. 2 cysteine pairs are disulfide-bonded: Cys599-Cys631 and Cys620-Cys643. Residues Asn1364 and Asn1532 are each glycosylated (N-linked (GlcNAc...) asparagine). Helical transmembrane passes span 2229-2249 (MVWN…FNIV), 2276-2296 (LTGI…PSWI), and 2339-2359 (VFYA…MSII). Asn2369 carries N-linked (GlcNAc...) asparagine glycosylation. The next 3 membrane-spanning stretches (helical) occupy residues 2420-2440 (AAKF…FVYS), 2489-2509 (VGIT…FLVL), and 2539-2559 (WEMV…VALI). Asn2565 carries N-linked (GlcNAc...) asparagine glycosylation. Residues 2569-2589 (VWLAVVIAVIFLIIHLVTQPF) traverse the membrane as a helical segment. Asn2602 carries N-linked (GlcNAc...) asparagine glycosylation. A run of 2 helical transmembrane segments spans residues 2607-2627 (IWTI…SGSV) and 2632-2652 (LLFV…SLMF). Composition is skewed to basic and acidic residues over residues 2827–2838 (FAAKDETPTAEE) and 3049–3069 (QEEN…DREI). Disordered regions lie at residues 2827–2847 (FAAK…DERL) and 3049–3101 (QEEN…LPEG). A coiled-coil region spans residues 2955 to 3068 (SEALQKRNRK…KEEREEADRE (114 aa)). Acidic residues predominate over residues 3083–3094 (GEDDTATIDDSS).

In terms of assembly, component of a complex, at least composed of cysteine repeat modular protein A (CRMPa), cysteine repeat modular protein B (CRMPb), micronemal protein 15 (MIC15) and thrombospondin type 1 domain-containing protein (TSP1).

The protein localises to the cell membrane. It localises to the endoplasmic reticulum. Its subcellular location is the golgi apparatus. Required for triggering rhoptry secretion. Plays a role in host cell invasion. In Toxoplasma gondii, this protein is Cysteine repeat modular protein A.